The following is a 430-amino-acid chain: Adenylosuccinate synthetase (430 aa).

Residues G11–K17 and G39–S41 contribute to the GTP site. The Proton acceptor role is filled by D12. Positions 12 and 39 each coordinate Mg(2+). IMP is bound by residues D12–K15, N37–H40, T129, R143, N221, T236, and R300. H40 (proton donor) is an active-site residue. V296–R302 is a substrate binding site. GTP contacts are provided by residues R302, K328 to D330, and G412 to G414.

The protein belongs to the adenylosuccinate synthetase family. Homodimer. It depends on Mg(2+) as a cofactor.

Its subcellular location is the cytoplasm. The enzyme catalyses IMP + L-aspartate + GTP = N(6)-(1,2-dicarboxyethyl)-AMP + GDP + phosphate + 2 H(+). Its pathway is purine metabolism; AMP biosynthesis via de novo pathway; AMP from IMP: step 1/2. Functionally, plays an important role in the de novo pathway and in the salvage pathway of purine nucleotide biosynthesis. Catalyzes the first committed step in the biosynthesis of AMP from IMP. In Neurospora crassa (strain ATCC 24698 / 74-OR23-1A / CBS 708.71 / DSM 1257 / FGSC 987), this protein is Adenylosuccinate synthetase.